Consider the following 451-residue polypeptide: mRNA cleavage and polyadenylation factor CLP1 (451 aa).

ATP-binding positions include Glu-33, Lys-72, and Asn-133–Ala-138.

It belongs to the Clp1 family. Clp1 subfamily. Component of a pre-mRNA cleavage factor complex. Interacts directly with PCF11.

The protein resides in the nucleus. In terms of biological role, required for endonucleolytic cleavage during polyadenylation-dependent pre-mRNA 3'-end formation. This is mRNA cleavage and polyadenylation factor CLP1 from Vanderwaltozyma polyspora (strain ATCC 22028 / DSM 70294 / BCRC 21397 / CBS 2163 / NBRC 10782 / NRRL Y-8283 / UCD 57-17) (Kluyveromyces polysporus).